We begin with the raw amino-acid sequence, 1189 residues long: Phosphinothricin tripeptide synthetase PhsB (1189 aa).

A Carrier 1 domain is found at 5–80; the sequence is QTDDVVTGRI…ALAKRIRASR (76 aa). Position 40 is an O-(pantetheine 4'-phosphoryl)serine (Ser40). 2 disordered regions span residues 75 to 97 and 454 to 476; these read RIRASRSTAPTASGPPRTAPVDS and TPDRDGREPGEGPFAREESGGDT. Positions 100–541 are condensation; it reads TAPLTFQQEP…VALLPLQEPA (442 aa). Residues 455-472 are compositionally biased toward basic and acidic residues; the sequence is PDRDGREPGEGPFAREES. Positions 572–969 are adenylation; it reads AQAHRTPDAV…GREDGQVKLR (398 aa). Residues 1045–1081 form a disordered region; that stretch reads DRVPLTPSGKTDRKALPDPAAGEQPRSGRGAAPGTPA. Residues 1076-1151 form the Carrier 2 domain; that stretch reads APGTPAEREL…DFALAVVTAQ (76 aa). Ser1111 is subject to O-(pantetheine 4'-phosphoryl)serine.

It belongs to the NRP synthetase family. The cofactor is pantetheine 4'-phosphate.

The enzyme catalyses holo-[peptidyl-carrier protein] + L-alanine + ATP = L-alanyl-[peptidyl-carrier protein] + AMP + diphosphate. Its pathway is secondary metabolite biosynthesis; bialaphos biosynthesis. Involved in the biosynthesis of phosphinothricin tripeptide (PTT), also known as bialaphos (BA), a natural-product antibiotic and potent herbicide. Adenylates L-alanine and loads it onto a peptidyl carrier domain via a thioester linkage to the phosphopanthetheine moiety. Shows weaker activity with aminobutyric acid and L-serine. This Streptomyces viridochromogenes (strain DSM 40736 / JCM 4977 / BCRC 1201 / Tue 494) protein is Phosphinothricin tripeptide synthetase PhsB.